Reading from the N-terminus, the 404-residue chain is Phosphopentomutase (404 aa).

Mn(2+)-binding residues include aspartate 10, aspartate 303, histidine 308, aspartate 344, histidine 345, and histidine 356.

The protein belongs to the phosphopentomutase family. The cofactor is Mn(2+).

The protein resides in the cytoplasm. The enzyme catalyses 2-deoxy-alpha-D-ribose 1-phosphate = 2-deoxy-D-ribose 5-phosphate. The catalysed reaction is alpha-D-ribose 1-phosphate = D-ribose 5-phosphate. It functions in the pathway carbohydrate degradation; 2-deoxy-D-ribose 1-phosphate degradation; D-glyceraldehyde 3-phosphate and acetaldehyde from 2-deoxy-alpha-D-ribose 1-phosphate: step 1/2. Isomerase that catalyzes the conversion of deoxy-ribose 1-phosphate (dRib-1-P) and ribose 1-phosphate (Rib-1-P) to deoxy-ribose 5-phosphate (dRib-5-P) and ribose 5-phosphate (Rib-5-P), respectively. This Shewanella sp. (strain MR-4) protein is Phosphopentomutase.